The sequence spans 84 residues: Envelope glycoprotein N (84 aa).

Residues 1 to 26 (MSCKKSARQSLYVSLCLFYILVFAAA) form the signal peptide. Residues 27–47 (TEVDFYSPECHSHTYEIVLNS) lie on the Virion surface side of the membrane. Residues 48–68 (FSSIWLLINLFLLLCSFAIFL) traverse the membrane as a helical segment. Topologically, residues 69-84 (KYWCYKTFASETVKGY) are intravirion.

This sequence belongs to the herpesviridae glycoprotein N family. Interacts (via N-terminus) with gM (via N-terminus). The gM-gN heterodimer forms the gCII complex.

The protein localises to the virion membrane. The protein resides in the host membrane. It localises to the host Golgi apparatus. It is found in the host trans-Golgi network. Its function is as follows. Envelope glycoprotein necessary for proper maturation of gM and modulation of its membrane fusion activity. Also plays a critical role in virion morphogenesis. In Homo sapiens (Human), this protein is Envelope glycoprotein N.